Consider the following 597-residue polypeptide: uncharacterized protein (597 aa).

Residues 16 to 78 (VGRLVWVRRR…LENSKTVKAF (63 aa)) enclose the PWWP domain. Disordered stretches follow at residues 126–210 (NLCN…MRGL) and 449–482 (QLKG…STPH). Basic and acidic residues predominate over residues 134–143 (EDSKRCLSGK). The segment covering 144-161 (EDEDSGSSDAEETEDDEL) has biased composition (acidic residues). Positions 166-185 (EQLQSSISSQEMNNVGASKV) are enriched in polar residues. The span at 450–460 (LKGKRNSRQMS) shows a compositional bias: basic residues. A compositionally biased stretch (basic and acidic residues) spans 461–470 (KKQEERRNVY).

This is an uncharacterized protein from Arabidopsis thaliana (Mouse-ear cress).